We begin with the raw amino-acid sequence, 167 residues long: Peptidoglycan-binding-like protein (167 aa).

A signal peptide spans 1–24 (MRSPKVKFLTIFTLSILITKMSFA).

Belongs to the IagB/IpgF/P19 family.

Its subcellular location is the periplasm. This is Peptidoglycan-binding-like protein (pbl) from Escherichia coli O157:H7.